The sequence spans 355 residues: Hydroxylysine kinase (355 aa).

Asp215 functions as the Proton acceptor in the catalytic mechanism.

It belongs to the aminoglycoside phosphotransferase family.

It localises to the cytoplasm. It carries out the reaction (5R)-5-hydroxy-L-lysine + GTP = (5R)-5-phosphooxy-L-lysine + GDP + H(+). Functionally, catalyzes the GTP-dependent phosphorylation of 5-hydroxy-L-lysine. In Danio rerio (Zebrafish), this protein is Hydroxylysine kinase (hykk).